The following is a 277-amino-acid chain: MGNGVQPLDPVAIQIGSISVKWYGVIIASAVVIALLLALSEANKRKMDKEIIVDLLIWAIPISIISARIYYVIFEWDFYKNNLGEIVKIWHGGIAIYGALIGAVLTAIIFSRIKKISFWQLADVVAPSLIIAQAIGRWGNFMNQEAHGAETTRSFLESLHLPDFIINQMYIDGAYYQPTFLYESLWNVLGFVILLIIRRTKIRRGELFLGYVIWYSFGRFFIEGMRTDSLMWGDFRVSQALSLLLIVLSIGIIIYRRLKMNPPYYMEDKFGKVVKKK.

4 consecutive transmembrane segments (helical) span residues 18–38, 51–71, 89–109, and 116–136; these read ISVK…LLLA, IIVD…RIYY, IWHG…TAII, and ISFW…QAIG. Arg-137 lines the a 1,2-diacyl-sn-glycero-3-phospho-(1'-sn-glycerol) pocket. Helical transmembrane passes span 177 to 197, 205 to 225, and 235 to 255; these read QPTF…LLII, GELF…IEGM, and FRVS…IIIY.

This sequence belongs to the Lgt family.

The protein localises to the cell membrane. It catalyses the reaction L-cysteinyl-[prolipoprotein] + a 1,2-diacyl-sn-glycero-3-phospho-(1'-sn-glycerol) = an S-1,2-diacyl-sn-glyceryl-L-cysteinyl-[prolipoprotein] + sn-glycerol 1-phosphate + H(+). It participates in protein modification; lipoprotein biosynthesis (diacylglyceryl transfer). Its function is as follows. Catalyzes the transfer of the diacylglyceryl group from phosphatidylglycerol to the sulfhydryl group of the N-terminal cysteine of a prolipoprotein, the first step in the formation of mature lipoproteins. This Listeria monocytogenes serovar 1/2a (strain ATCC BAA-679 / EGD-e) protein is Phosphatidylglycerol--prolipoprotein diacylglyceryl transferase.